The primary structure comprises 92 residues: Small ribosomal subunit protein uS19 (92 aa).

It belongs to the universal ribosomal protein uS19 family.

Protein S19 forms a complex with S13 that binds strongly to the 16S ribosomal RNA. This is Small ribosomal subunit protein uS19 from Trichlorobacter lovleyi (strain ATCC BAA-1151 / DSM 17278 / SZ) (Geobacter lovleyi).